Consider the following 957-residue polypeptide: MKGSWVVSTSIIRITLSFTFLFICHFSDVLAAPTRHLCRPEQKDALLKFKNEFEIGKPSPTCKMVGIESHRKTESWGNNSDCCNWEGVTCNAKSGEVIELNLSCSSLHGRFHSNSSIRNLHFLTTLDRSHNDFEGQITSSIENLSHLTSLDLSYNRFSGQILNSIGNLSRLTSLDLSFNQFSGQIPSSIGNLSHLTFLGLSGNRFFGQIPSSIGNLSHLTFLGLSGNRFFGQFPSSIGGLSNLTNLHLSYNKYSGQIPSSIGNLSQLIVLYLSVNNFYGEIPSSFGNLNQLTRLDVSFNKLGGNFPNVLLNLTGLSVVSLSNNKFTGTLPPNITSLSNLMAFYASDNAFTGTFPSFLFIIPSLTYLGLSGNQLKGTLEFGNISSPSNLQYLNIGSNNFIGPIPSSISKLINLQELGISHLNTQCRPVDFSIFSHLKSLDDLRLSYLTTTTIDLNDILPYFKTLRSLDLSGNLVSATNKSSVSSDPPSQSIQSLYLSGCGITDFPEILRTQHELGFLDVSNNKIKGQVPGWLWTLPNLFYLNLSNNTFIGFQRPTKPEPSMAYLLGSNNNFTGKIPSFICELRSLYTLDLSDNNFSGSIPRCMENLKSNLSELNLRQNNLSGGFPEHIFESLRSLDVGHNQLVGKLPRSLRFFSNLEVLNVESNRINDMFPFWLSSLQKLQVLVLRSNAFHGPINQALFPKLRIIDISHNHFNGSLPTEYFVEWSRMSSLGTYEDGSNVNYLGSGYYQDSMVLMNKGVESELVRILTIYTAVDFSGNKFEGEIPKSIGLLKELHVLNLSNNAFTGHIPSSIGNLTALESLDVSQNKLYGEIPQEIGNLSLLSYMNFSHNQLTGLVPGGQQFLTQRCSSFEGNLGLFGSSLEEVCRDIHTPASHQQFETPQTEEEDEDLISWIAAAIGFGPGIAFGLMFGYILVSYKPEWFMNPFGRNNRRRKRHTTTH.

A signal peptide spans 1–31; the sequence is MKGSWVVSTSIIRITLSFTFLFICHFSDVLA. Residues 32–910 lie on the Extracellular side of the membrane; the sequence is APTRHLCRPE…EEEDEDLISW (879 aa). Asn-78, Asn-101, Asn-114, Asn-143, Asn-167, Asn-191, and Asn-215 each carry an N-linked (GlcNAc...) asparagine glycan. 18 LRR repeats span residues 120 to 143, 144 to 167, 168 to 192, 194 to 216, 217 to 240, 241 to 264, 266 to 287, 288 to 312, 313 to 336, 338 to 360, 361 to 384, 386 to 409, 412 to 434, 435 to 459, 460 to 483, 487 to 510, 511 to 534, and 535 to 557; these read LHFL…SIEN, LSHL…SIGN, LSRL…IGNL, HLTF…IGNL, SHLT…IGGL, SNLT…IGNL, QLIV…SFGN, LNQL…LLNL, TGLS…ITSL, NLMA…LFII, PSLT…NISS, SNLQ…ISKL, LQEL…IFSH, LKSL…ILPY, FKTL…SVSS, SQSI…LRTQ, HELG…LWTL, and PNLF…TKPE. 2 N-linked (GlcNAc...) asparagine glycosylation sites follow: Asn-242 and Asn-263. N-linked (GlcNAc...) asparagine glycosylation is found at Asn-311 and Asn-332. An N-linked (GlcNAc...) asparagine glycan is attached at Asn-381. The N-linked (GlcNAc...) asparagine glycan is linked to Asn-477. Residues Asn-541, Asn-544, Asn-569, Asn-593, Asn-608, and Asn-618 are each glycosylated (N-linked (GlcNAc...) asparagine). Residues 558-580 form an LRR 19; degenerate repeat; the sequence is PSMAYLLGSNNNFTGKIPSFICE. 10 LRR repeats span residues 581-605, 606-630, 632-652, 653-675, 677-698, 699-722, 765-789, 790-813, 815-837, and 839-862; these read LRSL…MENL, KSNL…IFES, RSLD…LRFF, SNLE…WLSS, QKLQ…QALF, PKLR…YFVE, LTIY…IGLL, KELH…IGNL, ALES…IGNL, and LLSY…QFLT. Asn-712 carries N-linked (GlcNAc...) asparagine glycosylation. Asn-796, Asn-812, Asn-836, and Asn-844 each carry an N-linked (GlcNAc...) asparagine glycan. The helical transmembrane segment at 911-931 threads the bilayer; that stretch reads IAAAIGFGPGIAFGLMFGYIL. Residues 932–957 are Cytoplasmic-facing; sequence VSYKPEWFMNPFGRNNRRRKRHTTTH.

This sequence belongs to the RLP family.

It localises to the cell membrane. This chain is Receptor-like protein 34, found in Arabidopsis thaliana (Mouse-ear cress).